The following is a 131-amino-acid chain: Phosphoribosyl-AMP cyclohydrolase (131 aa).

D82 lines the Mg(2+) pocket. C83 lines the Zn(2+) pocket. Positions 84 and 86 each coordinate Mg(2+). The Zn(2+) site is built by C99 and C106.

The protein belongs to the PRA-CH family. Homodimer. The cofactor is Mg(2+). Zn(2+) serves as cofactor.

It is found in the cytoplasm. It carries out the reaction 1-(5-phospho-beta-D-ribosyl)-5'-AMP + H2O = 1-(5-phospho-beta-D-ribosyl)-5-[(5-phospho-beta-D-ribosylamino)methylideneamino]imidazole-4-carboxamide. Its pathway is amino-acid biosynthesis; L-histidine biosynthesis; L-histidine from 5-phospho-alpha-D-ribose 1-diphosphate: step 3/9. Functionally, catalyzes the hydrolysis of the adenine ring of phosphoribosyl-AMP. This Methanospirillum hungatei JF-1 (strain ATCC 27890 / DSM 864 / NBRC 100397 / JF-1) protein is Phosphoribosyl-AMP cyclohydrolase.